A 706-amino-acid polypeptide reads, in one-letter code: Fatty acid oxidation complex subunit alpha (706 aa).

Residues Met1–Pro188 are enoyl-CoA hydratase. Positions Arg308 to Phe706 are 3-hydroxyacyl-CoA dehydrogenase.

The protein in the N-terminal section; belongs to the enoyl-CoA hydratase/isomerase family. It in the central section; belongs to the 3-hydroxyacyl-CoA dehydrogenase family. In terms of assembly, heterotetramer of two alpha chains (FadJ) and two beta chains (FadI).

The protein localises to the cytoplasm. The enzyme catalyses a (3S)-3-hydroxyacyl-CoA = a (2E)-enoyl-CoA + H2O. It catalyses the reaction a 4-saturated-(3S)-3-hydroxyacyl-CoA = a (3E)-enoyl-CoA + H2O. It carries out the reaction a (3S)-3-hydroxyacyl-CoA + NAD(+) = a 3-oxoacyl-CoA + NADH + H(+). The catalysed reaction is (3S)-3-hydroxybutanoyl-CoA = (3R)-3-hydroxybutanoyl-CoA. Its pathway is lipid metabolism; fatty acid beta-oxidation. Catalyzes the formation of a hydroxyacyl-CoA by addition of water on enoyl-CoA. Also exhibits 3-hydroxyacyl-CoA epimerase and 3-hydroxyacyl-CoA dehydrogenase activities. The polypeptide is Fatty acid oxidation complex subunit alpha (Shewanella baltica (strain OS185)).